The primary structure comprises 220 residues: Translin-1 (220 aa).

It belongs to the translin family. In terms of assembly, forms an octameric ring-shaped structure, which is capable of binding DNA or RNA.

The protein resides in the cytoplasm. It is found in the nucleus. Its function is as follows. DNA-binding protein that specifically recognizes consensus sequences at the breakpoint junctions in chromosomal translocations. Selectively binds single-stranded d(GT)n and d(GTT)n microsatellite repeats. Has much higher affinities for the homologous RNA sequences (GU)n and (GUU)n. Does not bind double-stranded DNA. Has a role in meiosis. This chain is Translin-1 (tsn1), found in Schizosaccharomyces pombe (strain 972 / ATCC 24843) (Fission yeast).